Here is a 304-residue protein sequence, read N- to C-terminus: Sulfotransferase 1C3 (304 aa).

3'-phosphoadenylyl sulfate is bound at residue 56-61 (KSGTTW). Position 115–117 (115–117 (KTH)) interacts with substrate. Catalysis depends on histidine 117, which acts as the Proton acceptor. 3'-phosphoadenylyl sulfate is bound by residues arginine 139, serine 147, tyrosine 202, 236 to 241 (TSFDVM), and 264 to 268 (FMRKG).

It belongs to the sulfotransferase 1 family. As to expression, not detectable in any of the tissues tested. Expressed in the small intestine.

The protein localises to the cytoplasm. It catalyses the reaction an alcohol + 3'-phosphoadenylyl sulfate = an alkyl sulfate + adenosine 3',5'-bisphosphate + H(+). It carries out the reaction a phenol + 3'-phosphoadenylyl sulfate = an aryl sulfate + adenosine 3',5'-bisphosphate + H(+). The catalysed reaction is lithocholate + 3'-phosphoadenylyl sulfate = lithocholate sulfate + adenosine 3',5'-bisphosphate + H(+). Sulfotransferase that utilizes 3'-phospho-5'-adenylyl sulfate (PAPS) as sulfonate donor. Has sulfotransferase activity towards various substrates, such as bile acids, thyroid hormones and toward xenobiotic compounds such as chloro phenols and hydroxypyrenes. Lithocholic acid appears to be the best substrate among the endogenous compounds tested and 3,3',5,5'-tetrachloro-4,4'-biphenyldiol shows the highest specific activity among the xenobiotic compounds. In terms of biological role, exhibits weak sulphating activity and only toward chloro phenols (pentachlorophenol and 3,3',5,5'-tetrachloro-4,4'-biphenyldiol). This is Sulfotransferase 1C3 (SULT1C3) from Homo sapiens (Human).